A 276-amino-acid polypeptide reads, in one-letter code: Putative ankyrin repeat protein R838 (276 aa).

ANK repeat units follow at residues 134-163, 164-193, 195-223, and 225-253; these read DGDN…DPRS, DYDY…DISS, NHWP…DVRA, and NYNP…EIGS. The disordered stretch occupies residues 254-276; that stretch reads VSDDDTYDSDSSDYSEDDSESIN. The segment covering 255-276 has biased composition (acidic residues); that stretch reads SDDDTYDSDSSDYSEDDSESIN.

In Acanthamoeba polyphaga (Amoeba), this protein is Putative ankyrin repeat protein R838.